We begin with the raw amino-acid sequence, 134 residues long: Seminal plasma protein PDC-109 (134 aa).

Residues 1 to 25 (MALQLGLFLIWAGVSVFLQLDPVNG) form the signal peptide. Threonine 36 carries an O-linked (GalNAc...) threonine glycan. Fibronectin type-II domains follow at residues 44-88 (PEDE…YCAQ) and 89-134 (RDYA…WKYC). Intrachain disulfides connect cysteine 49-cysteine 73, cysteine 63-cysteine 86, cysteine 94-cysteine 119, and cysteine 108-cysteine 134.

This sequence belongs to the seminal plasma protein family. In terms of assembly, homodimer. In terms of processing, O-linked glycan consists of Gal-GalNAc disaccharide which is modified with a sialic acid residue (macro- and/or microheterogeneity account for differences between BSP-A1 and BSP-A2). Major component of seminal plasma.

The protein localises to the secreted. Could enhance the fertilizing capacity of bull spermatozoa upon interaction with heparin-like glycosaminoglycans present in the female genital tract. Exhibits both simulatory and inhibitory actions on the release of pituitary gonadotropins. This Bos taurus (Bovine) protein is Seminal plasma protein PDC-109.